The chain runs to 438 residues: Serine hydroxymethyltransferase (438 aa).

(6S)-5,6,7,8-tetrahydrofolate contacts are provided by residues Leu-133 and Gly-137–Leu-139. Residue Lys-242 is modified to N6-(pyridoxal phosphate)lysine.

Belongs to the SHMT family. As to quaternary structure, homodimer. It depends on pyridoxal 5'-phosphate as a cofactor.

The protein resides in the cytoplasm. It carries out the reaction (6R)-5,10-methylene-5,6,7,8-tetrahydrofolate + glycine + H2O = (6S)-5,6,7,8-tetrahydrofolate + L-serine. It functions in the pathway one-carbon metabolism; tetrahydrofolate interconversion. It participates in amino-acid biosynthesis; glycine biosynthesis; glycine from L-serine: step 1/1. Its function is as follows. Catalyzes the reversible interconversion of serine and glycine with tetrahydrofolate (THF) serving as the one-carbon carrier. This reaction serves as the major source of one-carbon groups required for the biosynthesis of purines, thymidylate, methionine, and other important biomolecules. Also exhibits THF-independent aldolase activity toward beta-hydroxyamino acids, producing glycine and aldehydes, via a retro-aldol mechanism. This is Serine hydroxymethyltransferase from Brucella melitensis biotype 2 (strain ATCC 23457).